The following is a 155-amino-acid chain: Urease accessory protein UreE (155 aa).

Belongs to the UreE family.

The protein localises to the cytoplasm. Functionally, involved in urease metallocenter assembly. Binds nickel. Probably functions as a nickel donor during metallocenter assembly. The chain is Urease accessory protein UreE from Deinococcus radiodurans (strain ATCC 13939 / DSM 20539 / JCM 16871 / CCUG 27074 / LMG 4051 / NBRC 15346 / NCIMB 9279 / VKM B-1422 / R1).